The following is a 447-amino-acid chain: Cysteine--tRNA ligase (447 aa).

Cys28 contacts Zn(2+). The short motif at 30–40 (PTVYNYIHVGN) is the 'HIGH' region element. 3 residues coordinate Zn(2+): Cys211, His236, and Glu240. The 'KMSKS' region signature appears at 268-272 (KMSKS). Lys271 contacts ATP.

It belongs to the class-I aminoacyl-tRNA synthetase family. Monomer. Requires Zn(2+) as cofactor.

It localises to the cytoplasm. The catalysed reaction is tRNA(Cys) + L-cysteine + ATP = L-cysteinyl-tRNA(Cys) + AMP + diphosphate. The protein is Cysteine--tRNA ligase of Streptococcus mutans serotype c (strain ATCC 700610 / UA159).